A 102-amino-acid polypeptide reads, in one-letter code: Small ubiquitin-related modifier 1 (102 aa).

A Ubiquitin-like domain is found at 21-98; sequence DYIKLKVIGQ…IEVYQEQTGG (78 aa). Gly-98 participates in a covalent cross-link: Glycyl lysine isopeptide (Gly-Lys) (interchain with K-? in acceptor proteins). Residues 99–102 constitute a propeptide that is removed on maturation; sequence HSTI.

The protein belongs to the ubiquitin family. SUMO subfamily. Interacts with sae2, ube2i, ranbp2, pias1 and pias2. Interacts with sox9 and sox10. Covalently attached to a number of proteins. In terms of processing, cleavage of precursor form by a sentrin-specific protease is necessary for function.

Its subcellular location is the nucleus membrane. The protein resides in the nucleus speckle. It localises to the cytoplasm. It is found in the nucleus. The protein localises to the PML body. Its subcellular location is the cell membrane. In terms of biological role, ubiquitin-like protein that can be covalently attached to proteins as a monomer or a lysine-linked polymer. Covalent attachment via an isopeptide bond to its substrates requires prior activation by the E1 complex sae1-sae2 and linkage to the E2 enzyme ube2i. This post-translational modification on lysine residues of proteins plays a crucial role in a number of cellular processes such as nuclear transport, DNA replication and repair, mitosis and signal transduction. Polymeric sumo1 chains are also susceptible to polyubiquitination which functions as a signal for proteasomal degradation of modified proteins. In Xenopus tropicalis (Western clawed frog), this protein is Small ubiquitin-related modifier 1 (sumo1).